The primary structure comprises 204 residues: MLHISALEKLVHELSRLPGIGPKTAQRLAYYILRTGNEYPERLSEALLRVKAEVHDCPTCFNYTDTDICRYCEDSHRSDESICVVEEPSDIMRIESSGAFRGRYHVLHGAISPLEGIGPKELKIKELIDRVEDGLSGTGPAIKEIILALDADLEGDTTILYLAKQLQGKGLKLSRIAHGVPIGSDIDFVDDRTMGRALQNRVEL.

The C4-type zinc-finger motif lies at 57–72 (CPTCFNYTDTDICRYC). One can recognise a Toprim domain in the interval 80-181 (ESICVVEEPS…KLSRIAHGVP (102 aa)).

The protein belongs to the RecR family.

Functionally, may play a role in DNA repair. It seems to be involved in an RecBC-independent recombinational process of DNA repair. It may act with RecF and RecO. This is Recombination protein RecR from Bdellovibrio bacteriovorus (strain ATCC 15356 / DSM 50701 / NCIMB 9529 / HD100).